The following is a 162-amino-acid chain: Ribosome maturation factor RimP (162 aa).

This sequence belongs to the RimP family.

It localises to the cytoplasm. Its function is as follows. Required for maturation of 30S ribosomal subunits. The polypeptide is Ribosome maturation factor RimP (Leptospira borgpetersenii serovar Hardjo-bovis (strain JB197)).